Here is a 436-residue protein sequence, read N- to C-terminus: Magnesium transporter MRS2-B (436 aa).

Low complexity-rich tracts occupy residues 1-14 and 29-54; these read MSAA…GDSA and VASV…FPGG. The tract at residues 1 to 60 is disordered; it reads MSAAAASSAAGDSAKQPLLHHQRGNPPHVASVSSPSLPSAPPGALAGGRRFPGGLDVPNL. The stretch at 176–242 forms a coiled coil; it reads LALEAACSFL…RDEIEQLMDD (67 aa). Helical transmembrane passes span 372–392 and 408–428; these read LLLT…GIFG and WVLI…LWFF. Positions 392-394 match the Required for magnesium transport activity motif; the sequence is GMN.

The protein belongs to the CorA metal ion transporter (MIT) (TC 1.A.35.5) family.

It localises to the membrane. In terms of biological role, magnesium transporter that may mediate the influx of magnesium. The sequence is that of Magnesium transporter MRS2-B (MRS2-B) from Oryza sativa subsp. indica (Rice).